Consider the following 63-residue polypeptide: LKKSLFLVVFLGLATLSICEEEKRETEEEEYNQGEDDKSEEKRFLSLIPHAINAVSTLVHHFG.

Residues 1 to 19 (LKKSLFLVVFLGLATLSIC) form the signal peptide. The propeptide occupies 20–41 (EEEKRETEEEEYNQGEDDKSEE). Position 62 is a phenylalanine amide (Phe-62).

Expressed by the skin glands.

It is found in the secreted. Its function is as follows. Has antimicrobial activity. This Pithecopus azureus (Orange-legged monkey tree frog) protein is Phylloseptin-Az1.